A 430-amino-acid chain; its full sequence is Asparagine--tRNA ligase (430 aa).

Belongs to the class-II aminoacyl-tRNA synthetase family. As to quaternary structure, homodimer.

It localises to the cytoplasm. It carries out the reaction tRNA(Asn) + L-asparagine + ATP = L-asparaginyl-tRNA(Asn) + AMP + diphosphate + H(+). The chain is Asparagine--tRNA ligase from Listeria monocytogenes serotype 4b (strain F2365).